The primary structure comprises 808 residues: Protein Ac66 (808 aa).

Pro residues predominate over residues 132–141 (PFSTPPPTQP). A disordered region spans residues 132–151 (PFSTPPPTQPPESNVAGVGG).

Interacts with the putative E3 ligase IE0 and with viral ubiquitin/vUbi.

It is found in the host nucleus. The protein localises to the host cytoplasm. Its function is as follows. Plays an essential role in the efficient egress of nucleocapsids from the host nucleus to the cytoplasm. This chain is Protein Ac66 (Ac66), found in Lepidoptera (butterflies and moths).